Here is a 53-residue protein sequence, read N- to C-terminus: UPF0391 membrane protein ECA0470 (53 aa).

Transmembrane regions (helical) follow at residues 4–24 (WGII…GGLA) and 30–47 (AAKI…VSLF).

This sequence belongs to the UPF0391 family.

Its subcellular location is the cell membrane. The chain is UPF0391 membrane protein ECA0470 from Pectobacterium atrosepticum (strain SCRI 1043 / ATCC BAA-672) (Erwinia carotovora subsp. atroseptica).